We begin with the raw amino-acid sequence, 349 residues long: MAIPITVLDCDLLLYGRGHRTLDRFKLDDVTDEYLMSMYGFPRQFIYYLVELLGASLSRPTQRSRAISPETQILAALGFYTSGSFQTRMGDAIGISQASMSRCVANVTEALVERASQFIHFPADEAAIQSLKDEFYGLAGMPGVIGAVDCIHVAIKAPNAEDLSYVNRKGLHSLNCLVVCDIRGALMTVETSWPGSLQDCAVLQQSSLSSQFETGMPKDSWLLGDSSFFLHTWLLTPLHIPETPAEYRYNRAHSATHSVIEKTLRTLCCRFRCLDGSKGALQYSPEKSSHIILACCVLHNISLEHGMDVWSSPVTGPIEQPPEGEDEQMESLDLEADRIRQELILTHFS.

Residues 148–300 (VDCIHVAIKA…IILACCVLHN (153 aa)) enclose the DDE Tnp4 domain. 4 residues coordinate a divalent metal cation: Asp149, Asp199, Asp225, and Glu261.

It belongs to the HARBI1 family. As to quaternary structure, interacts with NAIF1. A divalent metal cation serves as cofactor.

The protein localises to the nucleus. It localises to the cytoplasm. Functionally, transposase-derived protein that may have nuclease activity (Potential). Does not have transposase activity. This chain is Putative nuclease HARBI1 (Harbi1), found in Rattus norvegicus (Rat).